A 769-amino-acid polypeptide reads, in one-letter code: MSLRIKALDASVVNKIAAGEIIISPVNALKEMMENSIDANATMIDILVKEGGIKVLQITDNGSGINKADLPILCERFTTSKLQKFEDLSQIQTYGFRGEALASISHVARVTVTTKVKEDRCAWRVSYAEGKMLESPKPVAGKDGTTILVEDLFFNIPSRLRALRSHNDEYSKILDVVGRYAIHSKDIGFSCKKFGDSNYSLSVKPSYTVQDRIRTVFNKSVASNLITFHISKVEDLNLESVDGKVCNLNFISKKSISPIFFINNRLVTCDLLRRALNSVYSNYLPKGNRPFIYLGIVIDPAAVDVNVHPTKREVRFLSQDEIIEKIANQLHAELSAIDTSRTFKASSISTNKPESLIPFNDTIESDRNRKSLRQAQVVENSYTTANSQLRKAKRQENKLVRIDASQAKITSFLSSSQQFNFEGSSTKRQLSEPKVTNVSHSQEAEKLTLNESEQPRDANTINDNDLKDQPKKKQKLGDYKVPSIADDEKNALPISKDGYIRVPKERVNVNLTSIKKLREKVDDSIHRELTDIFANLNYVGVVDEERRLAAIQHDLKLFLIDYGSVCYELFYQIGLTDFANFGKINLQSTNVSDDIVLYNLLSEFDELNDDASKEKIISKIWDMSSMLNEYYSIELVNDGLDNDLKSVKLKSLPLLLKGYIPSLVKLPFFIYRLGKEVDWEDEQECLDGILREIALLYIPDMVPKVDTSDASLSEDEKAQFINRKEHISSLLEHVLFPCIKRRFLAPRHILKDVVEIANLPDLYKVFERC.

Residues 1-335 are DNA- and ATP-binding; the sequence is MSLRIKALDA…IANQLHAELS (335 aa). A compositionally biased stretch (polar residues) spans 422-441; that stretch reads EGSSTKRQLSEPKVTNVSHS. The interval 422 to 480 is disordered; it reads EGSSTKRQLSEPKVTNVSHSQEAEKLTLNESEQPRDANTINDNDLKDQPKKKQKLGDYK. Residue Ser441 is modified to Phosphoserine; by ATM or ATR. Composition is skewed to basic and acidic residues over residues 442–456 and 464–478; these read QEAE…EQPR and NDLK…KLGD. Residues 501–756 form an interaction with PMS1 region; it reads RVPKERVNVN…RHILKDVVEI (256 aa).

It belongs to the DNA mismatch repair MutL/HexB family. Heterodimer of MLH1 and PMS1, called MutLalpha, which is the major MMR MutL activity correcting base-base mismatches as well as IDLs. The heterodimer binds double strand DNA independently of a mismatch with positive cooperativity and has more than one DNA binding site. Forms a ternary complex with either the MSH2-MSH6 (MutSalpha) or the MSH2-MSH3 heterodimer (MutSbeta), which recognize and bind to mismatch DNA. Ternary complex formation is promoted by ATP binding. Heterodimer of MLH1 and MLH3, called MutLbeta, which is involved in correction of a specific subset of IDLs when associated with MutSbeta. Heterodimer of MLH1 and MLH2.

It localises to the nucleus. In terms of biological role, required for DNA mismatch repair (MMR), correcting base-base mismatches and insertion-deletion loops (IDLs) resulting from DNA replication, DNA damage or from recombination events between non-identical sequences during meiosis. Component of different MutL heterodimers that form a ternary complex with the MutS heterodimers, which initially recognize the DNA mismatches. This complex is thought to be responsible for directing the downstream MMR events, including strand discrimination, excision, and resynthesis. Plays a major role in maintaining the genetic stability of simple sequence repeats, the repair of heteroduplex sites present in meiotic recombination intermediates, and the promotion of meiotic crossing-over. In Saccharomyces cerevisiae (strain ATCC 204508 / S288c) (Baker's yeast), this protein is DNA mismatch repair protein MLH1 (MLH1).